The sequence spans 405 residues: MSAQPISDFYAYPDAAGHFGKFGGRFVAETLIGPLQELSAAYDQARQDPSFIAEYDKDLKHYVGRPSPIYHAERLSREVGGAQILLKREDLNHTGAHKINNTIGQALLASRMGKTRIIAETGAGQHGVASATVAARLGLECVVYMGATDIERQKINVYRMKLLGATVIPVTSGSATLKDALNEAMRDWVTNVRDTFYIIGTVAGPDPYPRMVRDFNAIVGREAREQMLQDYGRLPDAISACVGGGSNAIGLFHAFLNDPGVKIYGAEAAGDGIATGRHAASIAAGRPGVLHGNRTYVICDDDGQITETHSISAGLDYPGVGPEHSFLSDSGRAVYQGITDDEAMAAFHLLAHTEGILAALESSHAVAQSIKLARELPRDALVLCNLSGRGDKDVHTIAAREGIAL.

An N6-(pyridoxal phosphate)lysine modification is found at Lys98.

It belongs to the TrpB family. In terms of assembly, tetramer of two alpha and two beta chains. Requires pyridoxal 5'-phosphate as cofactor.

The enzyme catalyses (1S,2R)-1-C-(indol-3-yl)glycerol 3-phosphate + L-serine = D-glyceraldehyde 3-phosphate + L-tryptophan + H2O. It functions in the pathway amino-acid biosynthesis; L-tryptophan biosynthesis; L-tryptophan from chorismate: step 5/5. The beta subunit is responsible for the synthesis of L-tryptophan from indole and L-serine. The protein is Tryptophan synthase beta chain of Xanthomonas euvesicatoria pv. vesicatoria (strain 85-10) (Xanthomonas campestris pv. vesicatoria).